The sequence spans 610 residues: Elongation factor 4 (610 aa).

The tr-type G domain maps to 14 to 196 (NRIRNFSIIA…ALVANIPPPK (183 aa)). Residues 26-31 (DHGKST) and 143-146 (NKID) each bind GTP.

This sequence belongs to the TRAFAC class translation factor GTPase superfamily. Classic translation factor GTPase family. LepA subfamily.

It is found in the cell inner membrane. It carries out the reaction GTP + H2O = GDP + phosphate + H(+). Its function is as follows. Required for accurate and efficient protein synthesis under certain stress conditions. May act as a fidelity factor of the translation reaction, by catalyzing a one-codon backward translocation of tRNAs on improperly translocated ribosomes. Back-translocation proceeds from a post-translocation (POST) complex to a pre-translocation (PRE) complex, thus giving elongation factor G a second chance to translocate the tRNAs correctly. Binds to ribosomes in a GTP-dependent manner. The chain is Elongation factor 4 from Legionella pneumophila (strain Lens).